The chain runs to 27 residues: iraD leader peptide (27 aa).

In terms of biological role, a short protein whose stop codon overlaps with the start codon of downstream iraD; its mRNA secondary structure is predicted to fold and sequester the Shine-Dalgarno sequence of iraD. When this protein is expressed the downstream iraD is also expressed due to ribosomal coupling. The sequence is that of iraD leader peptide (idlP) from Escherichia coli (strain K12).